Reading from the N-terminus, the 213-residue chain is Riboflavin synthase (213 aa).

2 Lumazine-binding repeats span residues 1–97 (MFTG…IGGH) and 98–195 (LMSG…VDTV). 2,4-dihydroxypteridine is bound by residues 4 to 6 (GIV), 48 to 50 (CLT), 62 to 67 (DLMKET), 101 to 103 (GHI), lysine 137, 146 to 148 (SLT), and 160 to 165 (HLIPET).

As to quaternary structure, homotrimer. Unlike in B.subtilis, does not interact with 6,7-dimethyl-8-ribityllumazine synthase.

The enzyme catalyses 2 6,7-dimethyl-8-(1-D-ribityl)lumazine + H(+) = 5-amino-6-(D-ribitylamino)uracil + riboflavin. The protein operates within cofactor biosynthesis; riboflavin biosynthesis; riboflavin from 2-hydroxy-3-oxobutyl phosphate and 5-amino-6-(D-ribitylamino)uracil: step 2/2. In terms of biological role, catalyzes the dismutation of two molecules of 6,7-dimethyl-8-ribityllumazine, resulting in the formation of riboflavin and 5-amino-6-(D-ribitylamino)uracil. This chain is Riboflavin synthase (ribC), found in Escherichia coli (strain K12).